We begin with the raw amino-acid sequence, 532 residues long: 2,3-bisphosphoglycerate-independent phosphoglycerate mutase (532 aa).

The Mn(2+) site is built by aspartate 15 and serine 65. Serine 65 serves as the catalytic Phosphoserine intermediate. Substrate-binding positions include histidine 126, 156–157 (RD), arginine 188, arginine 194, 258–261 (RPDR), and lysine 331. Mn(2+) is bound by residues aspartate 398, histidine 402, aspartate 439, histidine 440, and histidine 457.

The protein belongs to the BPG-independent phosphoglycerate mutase family. Monomer. Mn(2+) is required as a cofactor.

It catalyses the reaction (2R)-2-phosphoglycerate = (2R)-3-phosphoglycerate. Its pathway is carbohydrate degradation; glycolysis; pyruvate from D-glyceraldehyde 3-phosphate: step 3/5. Functionally, catalyzes the interconversion of 2-phosphoglycerate and 3-phosphoglycerate. This chain is 2,3-bisphosphoglycerate-independent phosphoglycerate mutase, found in Gloeothece citriformis (strain PCC 7424) (Cyanothece sp. (strain PCC 7424)).